The primary structure comprises 256 residues: Proteasome subunit alpha (256 aa).

The interval 226–256 (LLPSQEESGSTDGEASGDAGDDKKTGDDKKS) is disordered. Positions 245–256 (GDDKKTGDDKKS) are enriched in basic and acidic residues.

Belongs to the peptidase T1A family. The 20S proteasome core is composed of 14 alpha and 14 beta subunits that assemble into four stacked heptameric rings, resulting in a barrel-shaped structure. The two inner rings, each composed of seven catalytic beta subunits, are sandwiched by two outer rings, each composed of seven alpha subunits. The catalytic chamber with the active sites is on the inside of the barrel. Has a gated structure, the ends of the cylinder being occluded by the N-termini of the alpha-subunits. Is capped by the proteasome-associated ATPase, ARC.

Its subcellular location is the cytoplasm. The protein operates within protein degradation; proteasomal Pup-dependent pathway. Its activity is regulated as follows. The formation of the proteasomal ATPase ARC-20S proteasome complex, likely via the docking of the C-termini of ARC into the intersubunit pockets in the alpha-rings, may trigger opening of the gate for substrate entry. Interconversion between the open-gate and close-gate conformations leads to a dynamic regulation of the 20S proteasome proteolysis activity. Functionally, component of the proteasome core, a large protease complex with broad specificity involved in protein degradation. In Saccharopolyspora erythraea (strain ATCC 11635 / DSM 40517 / JCM 4748 / NBRC 13426 / NCIMB 8594 / NRRL 2338), this protein is Proteasome subunit alpha.